Consider the following 348-residue polypeptide: Protein RecA (348 aa).

65-72 (GPESSGKT) provides a ligand contact to ATP.

This sequence belongs to the RecA family.

The protein localises to the cytoplasm. Can catalyze the hydrolysis of ATP in the presence of single-stranded DNA, the ATP-dependent uptake of single-stranded DNA by duplex DNA, and the ATP-dependent hybridization of homologous single-stranded DNAs. It interacts with LexA causing its activation and leading to its autocatalytic cleavage. This is Protein RecA from Enterococcus faecalis (strain ATCC 700802 / V583).